The sequence spans 403 residues: Octaketide synthase 2 (403 aa).

Residue cysteine 174 is part of the active site. CoA is bound by residues serine 281 and 318-321 (GGRA).

Belongs to the thiolase-like superfamily. Chalcone/stilbene synthases family. Homodimer.

It participates in secondary metabolite biosynthesis; flavonoid biosynthesis. In terms of biological role, catalyzes the iterative condensations of 8 molecules of malonyl-CoA to produce aromatic octaketides, SEK4 and SEK4b, the products of the minimal polyketide synthase for the benzoisochromanequinone actinorhodin. May be involved in the biosynthesis of the octaketide barbaloin. This chain is Octaketide synthase 2 (PKS4), found in Aloe arborescens (Kidachi aloe).